We begin with the raw amino-acid sequence, 309 residues long: Elongation factor Ts (309 aa).

Positions 82–85 (TDFV) are involved in Mg(2+) ion dislocation from EF-Tu.

This sequence belongs to the EF-Ts family.

The protein resides in the cytoplasm. In terms of biological role, associates with the EF-Tu.GDP complex and induces the exchange of GDP to GTP. It remains bound to the aminoacyl-tRNA.EF-Tu.GTP complex up to the GTP hydrolysis stage on the ribosome. In Rickettsia massiliae (strain Mtu5), this protein is Elongation factor Ts.